Consider the following 298-residue polypeptide: Tyrosine recombinase XerC (298 aa).

In terms of domain architecture, Core-binding (CB) spans 2–88 (TDLHTDVERY…ALRSFFDWLV (87 aa)). A Tyr recombinase domain is found at 109–288 (HLPKNIDVDD…DFQHLASVYD (180 aa)). Catalysis depends on residues Arg148, Lys172, His240, Arg243, and His266. Tyr275 serves as the catalytic O-(3'-phospho-DNA)-tyrosine intermediate.

The protein belongs to the 'phage' integrase family. XerC subfamily. As to quaternary structure, forms a cyclic heterotetrameric complex composed of two molecules of XerC and two molecules of XerD, in which XerC interacts with XerD via its C-terminal region, XerD interacts with XerC via its C-terminal region and so on.

The protein resides in the cytoplasm. FtsK may regulate the catalytic switch between XerC and XerD in the heterotetrameric complex during the two steps of the recombination process. Site-specific tyrosine recombinase, which acts by catalyzing the cutting and rejoining of the recombining DNA molecules. Binds cooperatively to specific DNA consensus sequences that are separated from XerD binding sites by a short central region, forming the heterotetrameric XerC-XerD complex that recombines DNA substrates. The complex is essential to convert dimers of the bacterial chromosome into monomers to permit their segregation at cell division. It also contributes to the segregational stability of plasmids. In the complex XerC specifically exchanges the top DNA strands. The polypeptide is Tyrosine recombinase XerC (Shigella dysenteriae serotype 1 (strain Sd197)).